We begin with the raw amino-acid sequence, 353 residues long: Phospho-N-acetylmuramoyl-pentapeptide-transferase (353 aa).

Helical transmembrane passes span 22 to 42 (FAFF…ITWA), 65 to 85 (TPTM…LSCI), 88 to 108 (DNIF…IGLI), 129 to 149 (LLTQ…SSEL), 161 to 181 (PLFD…ISSS), 192 to 212 (GLAT…LYLS), 228 to 248 (GLGE…GFLW), 256 to 276 (VFMG…LAII), 281 to 301 (ILLL…ILQV), and 330 to 350 (KIIV…LASI).

Belongs to the glycosyltransferase 4 family. MraY subfamily. It depends on Mg(2+) as a cofactor.

It is found in the cell inner membrane. It carries out the reaction UDP-N-acetyl-alpha-D-muramoyl-L-alanyl-gamma-D-glutamyl-meso-2,6-diaminopimeloyl-D-alanyl-D-alanine + di-trans,octa-cis-undecaprenyl phosphate = di-trans,octa-cis-undecaprenyl diphospho-N-acetyl-alpha-D-muramoyl-L-alanyl-D-glutamyl-meso-2,6-diaminopimeloyl-D-alanyl-D-alanine + UMP. Its pathway is cell wall biogenesis; peptidoglycan biosynthesis. In terms of biological role, catalyzes the initial step of the lipid cycle reactions in the biosynthesis of the cell wall peptidoglycan: transfers peptidoglycan precursor phospho-MurNAc-pentapeptide from UDP-MurNAc-pentapeptide onto the lipid carrier undecaprenyl phosphate, yielding undecaprenyl-pyrophosphoryl-MurNAc-pentapeptide, known as lipid I. In Campylobacter jejuni subsp. jejuni serotype O:23/36 (strain 81-176), this protein is Phospho-N-acetylmuramoyl-pentapeptide-transferase.